The following is a 191-amino-acid chain: dCTP deaminase, dUMP-forming (191 aa).

DCTP is bound by residues 101–106 (KSSLGR), aspartate 119, 127–129 (TLE), glutamine 148, tyrosine 162, and glutamine 174. Glutamate 129 serves as the catalytic Proton donor/acceptor.

Belongs to the dCTP deaminase family. Homotrimer.

The enzyme catalyses dCTP + 2 H2O = dUMP + NH4(+) + diphosphate. Its pathway is pyrimidine metabolism; dUMP biosynthesis; dUMP from dCTP: step 1/1. Functionally, bifunctional enzyme that catalyzes both the deamination of dCTP to dUTP and the hydrolysis of dUTP to dUMP without releasing the toxic dUTP intermediate. The chain is dCTP deaminase, dUMP-forming from Streptomyces avermitilis (strain ATCC 31267 / DSM 46492 / JCM 5070 / NBRC 14893 / NCIMB 12804 / NRRL 8165 / MA-4680).